A 428-amino-acid polypeptide reads, in one-letter code: Probable dual-specificity RNA methyltransferase RlmN 2 (428 aa).

E142 serves as the catalytic Proton acceptor. A Radical SAM core domain is found at 148–414; the sequence is FAGRATACVS…STVRQRRGID (267 aa). Cysteines 155 and 419 form a disulfide. [4Fe-4S] cluster is bound by residues C162, C166, and C169. Over residues 207-228 the composition is skewed to basic and acidic residues; that stretch reads MRDPSPGREAGEKSRDEADRHR. A disordered region spans residues 207–232; the sequence is MRDPSPGREAGEKSRDEADRHRAPPT. Residues 244–245, S276, 299–301, and N375 contribute to the S-adenosyl-L-methionine site; these read GE and SLH. C419 acts as the S-methylcysteine intermediate in catalysis.

The protein belongs to the radical SAM superfamily. RlmN family. [4Fe-4S] cluster serves as cofactor.

The protein resides in the cytoplasm. It catalyses the reaction adenosine(2503) in 23S rRNA + 2 reduced [2Fe-2S]-[ferredoxin] + 2 S-adenosyl-L-methionine = 2-methyladenosine(2503) in 23S rRNA + 5'-deoxyadenosine + L-methionine + 2 oxidized [2Fe-2S]-[ferredoxin] + S-adenosyl-L-homocysteine. It carries out the reaction adenosine(37) in tRNA + 2 reduced [2Fe-2S]-[ferredoxin] + 2 S-adenosyl-L-methionine = 2-methyladenosine(37) in tRNA + 5'-deoxyadenosine + L-methionine + 2 oxidized [2Fe-2S]-[ferredoxin] + S-adenosyl-L-homocysteine. Its function is as follows. Specifically methylates position 2 of adenine 2503 in 23S rRNA and position 2 of adenine 37 in tRNAs. In Opitutus terrae (strain DSM 11246 / JCM 15787 / PB90-1), this protein is Probable dual-specificity RNA methyltransferase RlmN 2.